The sequence spans 312 residues: Ribosomal protein L11 methyltransferase (312 aa).

S-adenosyl-L-methionine is bound by residues T162, G183, D205, and N248.

Belongs to the methyltransferase superfamily. PrmA family.

It is found in the cytoplasm. The catalysed reaction is L-lysyl-[protein] + 3 S-adenosyl-L-methionine = N(6),N(6),N(6)-trimethyl-L-lysyl-[protein] + 3 S-adenosyl-L-homocysteine + 3 H(+). Functionally, methylates ribosomal protein L11. The protein is Ribosomal protein L11 methyltransferase of Exiguobacterium sp. (strain ATCC BAA-1283 / AT1b).